Reading from the N-terminus, the 244-residue chain is MAIKGPRKHLKRLAAPANWQLPRKVKTFTVRPSPGPHSMDKSLPLLLVVRDVLKYADNAREAKKIIQTGKILIDGLKRKEYKHPAGLMDVLSIPEMDETYLVLFDESGRISLKKTDKTDVKLCKIVNKTVVKGGNIQLNLHDGRNQIVKVSDAAKAEEDVYKTGDSVLISIPEQSIAGHVAFGEGKLAYITGGKHVGEFAKIVEVENRALYSDIVTLENKDGEKFKTVKPYVFIVGQDEPVISM.

In terms of domain architecture, S4 RNA-binding spans 43–106; it reads LPLLLVVRDV…DETYLVLFDE (64 aa).

It belongs to the eukaryotic ribosomal protein eS4 family.

The sequence is that of Small ribosomal subunit protein eS4 from Methanococcus maripaludis (strain DSM 14266 / JCM 13030 / NBRC 101832 / S2 / LL).